The chain runs to 338 residues: Glyceraldehyde-3-phosphate dehydrogenase (338 aa).

Residues 12–13 (RI), aspartate 34, and arginine 80 each bind NAD(+). D-glyceraldehyde 3-phosphate is bound by residues 151–153 (SCT), threonine 182, 211–212 (TG), and arginine 234. Cysteine 152 acts as the Nucleophile in catalysis. Residue asparagine 316 coordinates NAD(+).

It belongs to the glyceraldehyde-3-phosphate dehydrogenase family. In terms of assembly, homotetramer.

The protein localises to the cytoplasm. It carries out the reaction D-glyceraldehyde 3-phosphate + phosphate + NAD(+) = (2R)-3-phospho-glyceroyl phosphate + NADH + H(+). The protein operates within carbohydrate degradation; glycolysis; pyruvate from D-glyceraldehyde 3-phosphate: step 1/5. This is Glyceraldehyde-3-phosphate dehydrogenase (GPD) from Paracoccidioides lutzii (strain ATCC MYA-826 / Pb01) (Paracoccidioides brasiliensis).